Reading from the N-terminus, the 1402-residue chain is DNA-directed RNA polymerase subunit beta' (1402 aa).

Positions 71, 73, 86, and 89 each coordinate Zn(2+). Mg(2+)-binding residues include Asp462, Asp464, and Asp466. Residues Cys811, Cys885, Cys892, and Cys895 each contribute to the Zn(2+) site.

The protein belongs to the RNA polymerase beta' chain family. As to quaternary structure, the RNAP catalytic core consists of 2 alpha, 1 beta, 1 beta' and 1 omega subunit. When a sigma factor is associated with the core the holoenzyme is formed, which can initiate transcription. Requires Mg(2+) as cofactor. It depends on Zn(2+) as a cofactor.

It carries out the reaction RNA(n) + a ribonucleoside 5'-triphosphate = RNA(n+1) + diphosphate. Functionally, DNA-dependent RNA polymerase catalyzes the transcription of DNA into RNA using the four ribonucleoside triphosphates as substrates. In Rhizobium etli (strain ATCC 51251 / DSM 11541 / JCM 21823 / NBRC 15573 / CFN 42), this protein is DNA-directed RNA polymerase subunit beta'.